The chain runs to 391 residues: Phosphoglycerate kinase (391 aa).

Substrate is bound by residues 21–23 (DLN), R36, 59–62 (HLGR), R113, and R146. Residues K197, E319, and 345–348 (GGDT) contribute to the ATP site.

The protein belongs to the phosphoglycerate kinase family. As to quaternary structure, monomer.

The protein resides in the cytoplasm. It carries out the reaction (2R)-3-phosphoglycerate + ATP = (2R)-3-phospho-glyceroyl phosphate + ADP. It participates in carbohydrate degradation; glycolysis; pyruvate from D-glyceraldehyde 3-phosphate: step 2/5. The chain is Phosphoglycerate kinase from Shewanella baltica (strain OS185).